The following is a 1821-amino-acid chain: MSRERKGLSELRSELYFLIARFLEDGPCQQAAQVLIREVAEKELLPRRTDWTGKEHPRTYQNLVKYYRHLAPDHLLQICHRLGPLLEQEIPQSVPGVQTLLGAGRQSLLRTNKSCKHVVWKGSALAALHCGRPPESPVNYGSPPSIADTLFSRKLNGKYRLERLVPTAVYQHMKMHKRILGHLSSVYCVTFDRTGRRIFTGSDDCLVKIWATDDGRLLATLRGHAAEISDMAVNYENTMIAAGSCDKMIRVWCLRTCAPLAVLQGHSASITSLQFSPLCSGSKRYLSSTGADGTICFWLWDAGTLKINPRPTKFTERPRPGVQMICSSFSAGGMFLATGSTDHIIRVYFFGSGQPEKISELEFHTDKVDSIQFSNTSNRFVSGSRDGTARIWQFKRREWKSILLDMATRPAGQNLQGIEDKITKMKVTMVAWDRHDNTVITAVNNMTLKVWNSYTGQLIHVLMGHEDEVFVLEPHPFDPRVLFSAGHDGNVIVWDLARGVKVRSYFNMIEGQGHGAVFDCKCSPDGQHFACTDSHGHLLIFGFGSSSKYDKIADQMFFHSDYRPLIRDANNFVLDEQTQQAPHLMPPPFLVDVDGNPHPSRYQRLVPGRENCREEQLIPQMGVTSSGLNQVLSQQANQDISPLDSMIQRLQQEQDLRRSGEAGVSNASRVNRGSVSSTSEVHSPPNIGLRRSGQIEGVRQMHSNAPRSEIATERDLVAWSRRVVVPELSAGVASRQEEWRTAKGEEEIKSYRSEEKRKHLTVAKENKILTVSKNHAHEHFLDLGDSKKQQANQHNYRTRSALEETPRPLEELENGTSSSDEGEVLAVSGGTSEEEERAWHSDGSSSDYSSDYSDWTADAGINLQPPKKVPKHKTKKPESSSDEEEESENQKQKHIKKERKKANEEKDGPTSPKKKKPKERKQKRLAVGELTENGLTLEEWLPSAWITDTLPRRCPFVPQMGDEVYYFRQGHEAYVEMARKNKIYSINPKKQPWHKMELREQELMKIVGIKYEVGLPTLCCLKLAFLDPDTGKLTGGSFTMKYHDMPDVIDFLVLRQQFDDAKYRPWNIGDRFRSVIDDAWWFGTIESQEPLQPEYPDSLFQCYNVCWDNGDTEKMSPWDMELIPNNAVFPEELGTSVPLTDVECRSLIYKPLDGEWGANPRDEECERIVGGINQLMTLDIASAFVAPVDLQAYPMYCTVVAYPTDLSTIKQRLENRFYRRFSSLMWEVRYIEHNTRTFNEPGSPIVKSAKFVTDLLLHFIKDQTCYNIIPLYNSMKKKVLSDSEEEEKDADVPGTSTRKRKDHQPRRRLRNRAQSYDIQAWKKQCQELLNLIFQCEDSEPFRQPVDLLEYPDYRDIIDTPMDFATVRETLEAGNYESPMELCKDVRLIFSNFKAYTPSKRSRIYSMSLRLSAFFEEHISSVLSDYKSALRFHKRNTISKKRKKRNRSSSLSSSAASSPERKKRILKPQLKSEVSTSPFSIPTRSVLPRHNAAQMNGKPESSSVVRTRSNRVAVDPVVTEQPSTSSATKAFVSKTNTSAMPGKAMLENSVRHSKALSTLSSPDPLTFSHATKNNSAKENMEKEKPVKRKMKSSVFSKASPLPKSAAVIEQGECKNNVLIPGTIQVNGHGGQPSKLVKRGPGRKPKVEVNTSSGEVTHKKRGRKPKNLQCAKQENSEQNNMHPIRADVLPSSTCNFLSETNAVKEDLLQKKSRGGRKPKRKMKTHNLDSELIVPTNVKVLRRSNRKKTDDPIDEEEEFEELKGSEPHMRTRNQGRRTAFYNEDDSEEEQRQLLFEDTSLTFGTSSRGRVRKLTEKAKANLIGW.

Phosphoserine is present on serine 136. WD repeat units lie at residues 181 to 222 (GHLS…ATLR), 224 to 262 (HAAE…PLAV), 265 to 310 (GHSA…INPR), 319 to 360 (RPGV…KISE), and 363 to 402 (FHTD…WKSI). Lysine 421 is covalently cross-linked (Glycyl lysine isopeptide (Lys-Gly) (interchain with G-Cter in SUMO2)). 3 WD repeats span residues 422-461 (ITKM…LIHV), 464-504 (GHED…KVRS), and 512-551 (QGHG…KYDK). 6 positions are modified to phosphoserine: serine 641, serine 659, serine 674, serine 677, serine 683, and serine 692. Disordered stretches follow at residues 653 to 695 (EQDL…SGQI) and 782 to 927 (DLGD…RLAV). Residues 665–681 (SNASRVNRGSVSSTSEV) are compositionally biased toward polar residues. Residues 800–810 (SALEETPRPLE) show a composition bias toward basic and acidic residues. Residues 841–854 (SDGSSSDYSSDYSD) are compositionally biased toward low complexity. Serine 879, serine 880, serine 881, and serine 911 each carry phosphoserine. A compositionally biased stretch (basic residues) spans 912 to 924 (PKKKKPKERKQKR). A mediates interaction with IRS1 region spans residues 924 to 1129 (RLAVGELTEN…MELIPNNAVF (206 aa)). A Bromo 1 domain is found at 1156 to 1263 (WGANPRDEEC…DLLLHFIKDQ (108 aa)). Serine 1281, serine 1283, and serine 1296 each carry phosphoserine. Positions 1282–1310 (DSEEEEKDADVPGTSTRKRKDHQPRRRLR) are disordered. The segment covering 1297-1310 (TRKRKDHQPRRRLR) has biased composition (basic residues). A Phosphoserine modification is found at serine 1315. Positions 1316–1421 (YDIQAWKKQC…AFFEEHISSV (106 aa)) constitute a Bromo 2 domain. Residue threonine 1359 is modified to Phosphothreonine. The residue at position 1405 (serine 1405) is a Phosphoserine. A compositionally biased stretch (basic residues) spans 1435 to 1446 (NTISKKRKKRNR). The disordered stretch occupies residues 1435-1507 (NTISKKRKKR…PESSSVVRTR (73 aa)). The span at 1447 to 1457 (SSSLSSSAASS) shows a compositional bias: low complexity. A Glycyl lysine isopeptide (Lys-Gly) (interchain with G-Cter in SUMO1); alternate cross-link involves residue lysine 1470. Lysine 1470 is covalently cross-linked (Glycyl lysine isopeptide (Lys-Gly) (interchain with G-Cter in SUMO2); alternate). A compositionally biased stretch (polar residues) spans 1471 to 1482 (SEVSTSPFSIPT). A Phosphoserine modification is found at serine 1479. An N6-acetyllysine modification is found at lysine 1497. Serine 1525 carries the post-translational modification Phosphoserine. Lysine 1533 carries the post-translational modification N6-acetyllysine. Residues 1556–1576 (STLSSPDPLTFSHATKNNSAK) are compositionally biased toward polar residues. Disordered regions lie at residues 1556–1596 (STLS…VFSK), 1623–1676 (QVNG…NSEQ), and 1740–1785 (RSNR…DSEE). Serine 1560 is subject to Phosphoserine. Residue lysine 1644 forms a Glycyl lysine isopeptide (Lys-Gly) (interchain with G-Cter in SUMO2) linkage. Serine 1651 is subject to Phosphoserine. Lysine 1670 is covalently cross-linked (Glycyl lysine isopeptide (Lys-Gly) (interchain with G-Cter in SUMO2)). A phosphoserine mark is found at serine 1762 and serine 1783.

Interacts (via bromo domain) with acetylated lysine residues on histone H1.4, histone H3 and H4 (in vitro). Interacts with IRS1 and IRS2. Widely expressed with most abundant expression detected in pancreatic islets, brain and skeletal muscle. Predominantly expressed in developing and regenerating neurons. Expressed in adult brain (granular layer of the olfactorium bulb, hippocampus, dentate gyrus and cerebellum internal granular layer). Expressed in the CA3 region of adult hippocampus, adult and fetal retina, perinatal dorsal root ganglion and embryonal olfactory epithelia (at protein level).

The protein localises to the nucleus. In terms of biological role, probable regulator of the insulin and insulin-like growth factor signaling pathways. Stimulates cell proliferation through regulation of cyclin transcription and has an anti-apoptotic activity through AKT1 phosphorylation and activation. Plays a role in the regulation of cell morphology and cytoskeletal organization. This is PH-interacting protein (Phip) from Mus musculus (Mouse).